Here is a 71-residue protein sequence, read N- to C-terminus: V-type proton ATPase subunit e (71 aa).

The Lumenal portion of the chain corresponds to M1 to S2. A helical transmembrane segment spans residues F3–V23. Residues T24–T35 are Cytoplasmic-facing. Residues S36–L56 traverse the membrane as a helical segment. At H57 to Y71 the chain is on the lumenal side.

It belongs to the V-ATPase e1/e2 subunit family. As to quaternary structure, V-ATPase is a heteromultimeric enzyme composed of a peripheral catalytic V1 complex (components A to H) attached to an integral membrane V0 proton pore complex (components: a, c, c', c'', d, e, f and VOA1).

Its subcellular location is the vacuole membrane. In terms of biological role, subunit of the V0 complex of vacuolar(H+)-ATPase (V-ATPase), a multisubunit enzyme composed of a peripheral complex (V1) that hydrolyzes ATP and a membrane integral complex (V0) that translocates protons. V-ATPase is responsible for acidifying and maintaining the pH of intracellular compartments. This is V-type proton ATPase subunit e (VMA9) from Cryptococcus neoformans var. neoformans serotype D (strain JEC21 / ATCC MYA-565) (Filobasidiella neoformans).